Consider the following 338-residue polypeptide: Cilia- and flagella-associated protein 36 (338 aa).

Residues 142-179 (ISDLEQEEMKLVSEALRLSKEEYEREQLRRSAKELNCT) adopt a coiled-coil conformation. Disordered regions lie at residues 175-220 (ELNC…ESPY) and 281-314 (KKQE…KKSL). Over residues 187–202 (KQSNGSERTPSNTELP) the composition is skewed to polar residues. The stretch at 255–330 (NLSQAEKEQL…AEKLKEEVIL (76 aa)) forms a coiled coil.

It belongs to the CFAP36 family.

Its subcellular location is the nucleus. It is found in the cytoplasm. The protein resides in the cell projection. The protein localises to the cilium. It localises to the flagellum. The protein is Cilia- and flagella-associated protein 36 of Xenopus laevis (African clawed frog).